Here is a 142-residue protein sequence, read N- to C-terminus: Large ribosomal subunit protein uL11 (142 aa).

It belongs to the universal ribosomal protein uL11 family. In terms of assembly, part of the ribosomal stalk of the 50S ribosomal subunit. Interacts with L10 and the large rRNA to form the base of the stalk. L10 forms an elongated spine to which L12 dimers bind in a sequential fashion forming a multimeric L10(L12)X complex. Post-translationally, one or more lysine residues are methylated.

Forms part of the ribosomal stalk which helps the ribosome interact with GTP-bound translation factors. The polypeptide is Large ribosomal subunit protein uL11 (Actinobacillus succinogenes (strain ATCC 55618 / DSM 22257 / CCUG 43843 / 130Z)).